Reading from the N-terminus, the 343-residue chain is Heat-inducible transcription repressor HrcA (343 aa).

This sequence belongs to the HrcA family.

In terms of biological role, negative regulator of class I heat shock genes (grpE-dnaK-dnaJ and groELS operons). Prevents heat-shock induction of these operons. This is Heat-inducible transcription repressor HrcA from Phytoplasma mali (strain AT).